The following is a 78-amino-acid chain: Structural DNA-binding protein p10 (78 aa).

Residues 1 to 27 (MPTKAGTKSTANKKTTKGSSKSGSSRG) are compositionally biased toward low complexity. The interval 1–41 (MPTKAGTKSTANKKTTKGSSKSGSSRGHTGKTHASSSMHSG) is disordered.

This sequence belongs to the asfivirus P10 family.

The protein localises to the virion. Functionally, may play a role in genome packaging through direct interaction with viral DNA. Binds to ssDNA and dsDNA with the same apparent affinity in vitro. The chain is Structural DNA-binding protein p10 from African swine fever virus (strain Badajoz 1971 Vero-adapted) (Ba71V).